Reading from the N-terminus, the 212-residue chain is Methylthioribulose-1-phosphate dehydratase (212 aa).

2 residues coordinate Zn(2+): His-97 and His-99.

This sequence belongs to the aldolase class II family. MtnB subfamily. Homotetramer. It depends on Zn(2+) as a cofactor.

The catalysed reaction is 5-(methylsulfanyl)-D-ribulose 1-phosphate = 5-methylsulfanyl-2,3-dioxopentyl phosphate + H2O. It functions in the pathway amino-acid biosynthesis; L-methionine biosynthesis via salvage pathway; L-methionine from S-methyl-5-thio-alpha-D-ribose 1-phosphate: step 2/6. Catalyzes the dehydration of methylthioribulose-1-phosphate (MTRu-1-P) into 2,3-diketo-5-methylthiopentyl-1-phosphate (DK-MTP-1-P). This chain is Methylthioribulose-1-phosphate dehydratase, found in Bacillus thuringiensis (strain Al Hakam).